The chain runs to 69 residues: U-Asilidin(12)-Dg3b (69 aa).

The first 19 residues, Met-1–Ala-19, serve as a signal peptide directing secretion. A propeptide spanning residues Ser-20–Arg-33 is cleaved from the precursor. Intrachain disulfides connect Cys-36–Cys-59, Cys-45–Cys-65, and Cys-49–Cys-67.

This sequence belongs to the asilidin-12 family. Expressed by the venom gland.

Its subcellular location is the secreted. The recombinant peptide moderately increases Kv11.1/KCNH2/ERG1 currents and shifts the voltage-dependence of the channel activation to hyperpolarised potentials. In vivo, induces neurotoxic effects when injected into insects (tested on L.cuprina and A.domesticus). This Dolopus genitalis (Giant Australian assassin fly) protein is U-Asilidin(12)-Dg3b.